The sequence spans 164 residues: Cyclic pyranopterin monophosphate synthase (164 aa).

Residues Leu-77–His-79 and Met-115–Glu-116 each bind substrate. Asp-130 is a catalytic residue.

This sequence belongs to the MoaC family. Homohexamer; trimer of dimers.

It catalyses the reaction (8S)-3',8-cyclo-7,8-dihydroguanosine 5'-triphosphate = cyclic pyranopterin phosphate + diphosphate. Its pathway is cofactor biosynthesis; molybdopterin biosynthesis. Functionally, catalyzes the conversion of (8S)-3',8-cyclo-7,8-dihydroguanosine 5'-triphosphate to cyclic pyranopterin monophosphate (cPMP). The polypeptide is Cyclic pyranopterin monophosphate synthase (Rhizobium meliloti (strain 1021) (Ensifer meliloti)).